A 248-amino-acid polypeptide reads, in one-letter code: N-acylneuraminate-9-phosphatase (248 aa).

Residue D12 coordinates Mg(2+). L13, D14, T131, N132, and K164 together coordinate phosphate. D14 contributes to the Mg(2+) binding site. Mg(2+) is bound at residue D189.

Belongs to the HAD-like hydrolase superfamily. NANP family. It depends on Mg(2+) as a cofactor.

It carries out the reaction N-acetylneuraminate 9-phosphate + H2O = N-acetylneuraminate + phosphate. The enzyme catalyses N-glycoloylneuraminate 9-phosphate + H2O = N-glycoloylneuraminate + phosphate. It participates in amino-sugar metabolism; N-acetylneuraminate biosynthesis. Inhibited by calcium. Inhibited by vanadate, sodium orthovanadate and phosphonate. Functionally, catalyzes the dephosphorylation of N-acylneuraminate 9-phosphate (Neu5Ac-9-P) to N-acetylneuraminic acid (Neu5Ac or sialic acid). Can also use N-glycoloylneuraminate 9-phosphate as substrate. The sequence is that of N-acylneuraminate-9-phosphatase from Rattus norvegicus (Rat).